Here is a 236-residue protein sequence, read N- to C-terminus: (5-formylfuran-3-yl)methyl phosphate synthase (236 aa).

The Schiff-base intermediate with substrate role is filled by Lys27. Catalysis depends on Lys85, which acts as the Proton acceptor.

The protein belongs to the MfnB family.

The enzyme catalyses 2 D-glyceraldehyde 3-phosphate = 4-(hydroxymethyl)-2-furancarboxaldehyde phosphate + phosphate + 2 H2O. The protein operates within cofactor biosynthesis; methanofuran biosynthesis. Catalyzes the formation of 4-(hydroxymethyl)-2-furancarboxaldehyde phosphate (4-HFC-P) from two molecules of glyceraldehyde-3-P (GA-3-P). This Methanococcus maripaludis (strain DSM 14266 / JCM 13030 / NBRC 101832 / S2 / LL) protein is (5-formylfuran-3-yl)methyl phosphate synthase.